Here is a 302-residue protein sequence, read N- to C-terminus: Troponin T, cardiac muscle isoforms (302 aa).

Over residues 1-55 (MSDSEEVVEEYEQEQEEEYVEEEEEEWLEEDDGQEDQVDEEEEETEETTAEEQED) the composition is skewed to acidic residues. 3 disordered regions span residues 1–99 (MSDS…GERL), 138–230 (KDRI…RKPL), and 280–302 (SDHQKVKGSKAARGKTMVGGRWK). S2 carries the post-translational modification N-acetylserine. At S2 the chain carries Phosphoserine; by CK2. Over residues 65–79 (EGDREQEPGEGESKP) the composition is skewed to basic and acidic residues. A compositionally biased stretch (pro residues) spans 82–93 (KPFMPNLVPPKI). Composition is skewed to basic and acidic residues over residues 138-186 (KDRI…EKEA) and 204-230 (KSEKKGGKKQTEREKKKKILSERRKPL).

It belongs to the troponin T family.

In terms of biological role, troponin T is the tropomyosin-binding subunit of troponin, the thin filament regulatory complex which confers calcium-sensitivity to striated muscle actomyosin ATPase activity. The polypeptide is Troponin T, cardiac muscle isoforms (TNNT2) (Gallus gallus (Chicken)).